The following is a 101-amino-acid chain: Therostasin (101 aa).

A signal peptide spans 1–19 (MRGLAVLLLVACFCSVAFG). 2 consecutive Antistasin-like domains span residues 21 to 46 (CENT…TCLC) and 49 to 75 (CNDA…FCTC).

In terms of tissue distribution, salivary glands.

Its subcellular location is the secreted. Potent inhibitor of factor Xa. It also inhibits trypsin in a weaker manner. The protein is Therostasin of Theromyzon tessulatum (Duck leech).